The primary structure comprises 347 residues: GMP reductase (347 aa).

108–131 (ADFEKTKQILDLNPALNFVCIDVA) is an NADP(+) binding site. Glycine 181 and glycine 183 together coordinate K(+). Cysteine 186 functions as the Thioimidate intermediate in the catalytic mechanism. 216–239 (IVSDGGCTTPGDVAKAFGGGADFV) provides a ligand contact to NADP(+).

It belongs to the IMPDH/GMPR family. GuaC type 1 subfamily. As to quaternary structure, homotetramer.

The catalysed reaction is IMP + NH4(+) + NADP(+) = GMP + NADPH + 2 H(+). Its function is as follows. Catalyzes the irreversible NADPH-dependent deamination of GMP to IMP. It functions in the conversion of nucleobase, nucleoside and nucleotide derivatives of G to A nucleotides, and in maintaining the intracellular balance of A and G nucleotides. The polypeptide is GMP reductase (Shigella dysenteriae serotype 1 (strain Sd197)).